Consider the following 273-residue polypeptide: Putative pyruvate, phosphate dikinase regulatory protein (273 aa).

An ADP-binding site is contributed by 153 to 160 (GISRTSKT).

The protein belongs to the pyruvate, phosphate/water dikinase regulatory protein family. PDRP subfamily.

It catalyses the reaction N(tele)-phospho-L-histidyl/L-threonyl-[pyruvate, phosphate dikinase] + ADP = N(tele)-phospho-L-histidyl/O-phospho-L-threonyl-[pyruvate, phosphate dikinase] + AMP + H(+). The catalysed reaction is N(tele)-phospho-L-histidyl/O-phospho-L-threonyl-[pyruvate, phosphate dikinase] + phosphate + H(+) = N(tele)-phospho-L-histidyl/L-threonyl-[pyruvate, phosphate dikinase] + diphosphate. Functionally, bifunctional serine/threonine kinase and phosphorylase involved in the regulation of the pyruvate, phosphate dikinase (PPDK) by catalyzing its phosphorylation/dephosphorylation. The sequence is that of Putative pyruvate, phosphate dikinase regulatory protein from Agrobacterium fabrum (strain C58 / ATCC 33970) (Agrobacterium tumefaciens (strain C58)).